The primary structure comprises 2114 residues: Protein CELLULOSE SYNTHASE INTERACTIVE 2 (2114 aa).

ARM repeat units follow at residues Thr-2 to Leu-42, Lys-46 to Lys-87, Lys-89 to Leu-128, Asn-135 to Gly-177, Asp-180 to Arg-219, Thr-222 to Ser-262, Glu-265 to Thr-305, Gly-354 to Gly-394, Val-396 to Lys-435, Glu-479 to Cys-519, Glu-522 to Lys-561, Ala-563 to Ala-595, Glu-601 to Ser-640, Lys-643 to Asn-682, Ala-708 to Arg-750, Ser-774 to Lys-816, His-825 to Lys-865, Leu-870 to Lys-910, Thr-914 to Pro-953, Pro-994 to Ala-1033, Pro-1044 to Arg-1083, Asp-1087 to Asn-1128, Glu-1141 to Asp-1182, Asp-1185 to Arg-1225, Pro-1227 to Leu-1264, Phe-1265 to Lys-1304, Arg-1312 to Thr-1353, Glu-1355 to Asp-1394, Lys-1396 to Lys-1435, Ile-1454 to Pro-1494, Leu-1496 to Val-1525, Leu-1526 to Glu-1564, Gln-1566 to Val-1605, Thr-1606 to Arg-1648, Asn-1650 to Asp-1689, Ser-1690 to Lys-1730, Arg-1732 to Gln-1771, His-1772 to Met-1813, Arg-1816 to Ser-1855, His-1857 to Thr-1898, Pro-1901 to Gln-1940, and Thr-1949 to Gly-1993. The C2 domain occupies Ser-1974 to Phe-2087.

As to quaternary structure, associates with cellulase synthase (CESA) complexes. Binds to cortical microtubules.

Its subcellular location is the cell membrane. It is found in the cytoplasm. The protein resides in the cytoskeleton. Functionally, regulator of the microtubular cytoskeleton. Microtubule-associated protein involved in the association of cellulase synthase (CESA) complexes (CSCs) and cortical microtubules. Promotes dynamics of CSCs in the plasma membrane. Regulates primary cell wall biosynthesis and cellulose microfibrils organization. In Arabidopsis thaliana (Mouse-ear cress), this protein is Protein CELLULOSE SYNTHASE INTERACTIVE 2.